A 146-amino-acid polypeptide reads, in one-letter code: Hemoglobin subunit beta (146 aa).

Position 1 is an N-acetylvaline (Val1). In terms of domain architecture, Globin spans 2–146; the sequence is HLTAAEKSAI…VANALAHKYH (145 aa). Residue His63 participates in heme b binding. Lys82 is modified (N6-acetyllysine). His92 serves as a coordination point for heme b. Cys93 carries the post-translational modification S-nitrosocysteine. Lys144 bears the N6-acetyllysine mark.

The protein belongs to the globin family. As to quaternary structure, heterotetramer of two alpha chains and two beta chains. In terms of tissue distribution, red blood cells.

Its function is as follows. Involved in oxygen transport from the lung to the various peripheral tissues. The protein is Hemoglobin subunit beta (HBB) of Cavia porcellus (Guinea pig).